A 146-amino-acid polypeptide reads, in one-letter code: Copper transporter 5 (146 aa).

The helical transmembrane segment at 24 to 44 (WLSYILTLIACFVFSAFYQYL) threads the bilayer. Positions 55–74 (SSSRRAPPPPRSSSGVSAPL) are disordered. The chain crosses the membrane as a helical span at residues 101–121 (LLMLAAMSFNGGVFIAIVVGL).

Belongs to the copper transporter (Ctr) (TC 1.A.56) family. SLC31A subfamily. In terms of tissue distribution, highly expressed in leaves and stems and at lower levels in roots and flowers.

It localises to the membrane. Its function is as follows. Involved in the transport of copper. In Arabidopsis thaliana (Mouse-ear cress), this protein is Copper transporter 5 (COPT5).